We begin with the raw amino-acid sequence, 607 residues long: Elongation factor 4 (607 aa).

Residues 11–193 form the tr-type G domain; that stretch reads ENIRNFSIIA…KIVEVVPAPD (183 aa). GTP contacts are provided by residues 23 to 28 and 140 to 143; these read DHGKST and NKID.

The protein belongs to the TRAFAC class translation factor GTPase superfamily. Classic translation factor GTPase family. LepA subfamily.

Its subcellular location is the cell membrane. It carries out the reaction GTP + H2O = GDP + phosphate + H(+). Functionally, required for accurate and efficient protein synthesis under certain stress conditions. May act as a fidelity factor of the translation reaction, by catalyzing a one-codon backward translocation of tRNAs on improperly translocated ribosomes. Back-translocation proceeds from a post-translocation (POST) complex to a pre-translocation (PRE) complex, thus giving elongation factor G a second chance to translocate the tRNAs correctly. Binds to ribosomes in a GTP-dependent manner. This chain is Elongation factor 4, found in Staphylococcus aureus (strain MW2).